Reading from the N-terminus, the 508-residue chain is Photosystem II CP47 reaction center protein (508 aa).

The next 6 membrane-spanning stretches (helical) occupy residues 21-36, 101-115, 140-156, 203-218, 237-252, and 457-472; these read SVHI…WAGS, IVFS…IWHW, GIHL…FGAF, IAAG…FHLS, VLSS…AFVV, and SFAL…HGAR.

It belongs to the PsbB/PsbC family. PsbB subfamily. In terms of assembly, PSII is composed of 1 copy each of membrane proteins PsbA, PsbB, PsbC, PsbD, PsbE, PsbF, PsbH, PsbI, PsbJ, PsbK, PsbL, PsbM, PsbT, PsbX, PsbY, PsbZ, Psb30/Ycf12, at least 3 peripheral proteins of the oxygen-evolving complex and a large number of cofactors. It forms dimeric complexes. The cofactor is Binds multiple chlorophylls. PSII binds additional chlorophylls, carotenoids and specific lipids..

It is found in the plastid. The protein resides in the chloroplast thylakoid membrane. One of the components of the core complex of photosystem II (PSII). It binds chlorophyll and helps catalyze the primary light-induced photochemical processes of PSII. PSII is a light-driven water:plastoquinone oxidoreductase, using light energy to abstract electrons from H(2)O, generating O(2) and a proton gradient subsequently used for ATP formation. The sequence is that of Photosystem II CP47 reaction center protein from Aethionema grandiflorum (Persian stone-cress).